The chain runs to 334 residues: Phosphoribosylformylglycinamidine cyclo-ligase (334 aa).

The protein belongs to the AIR synthase family.

The protein localises to the cytoplasm. The catalysed reaction is 2-formamido-N(1)-(5-O-phospho-beta-D-ribosyl)acetamidine + ATP = 5-amino-1-(5-phospho-beta-D-ribosyl)imidazole + ADP + phosphate + H(+). It functions in the pathway purine metabolism; IMP biosynthesis via de novo pathway; 5-amino-1-(5-phospho-D-ribosyl)imidazole from N(2)-formyl-N(1)-(5-phospho-D-ribosyl)glycinamide: step 2/2. This Thermococcus gammatolerans (strain DSM 15229 / JCM 11827 / EJ3) protein is Phosphoribosylformylglycinamidine cyclo-ligase.